The primary structure comprises 59 residues: Large ribosomal subunit protein bL32 (59 aa).

Residues 1–16 (MAVPKRKTSPSRRGMR) are compositionally biased toward basic residues. Residues 1–20 (MAVPKRKTSPSRRGMRRSHD) are disordered.

The protein belongs to the bacterial ribosomal protein bL32 family.

The protein is Large ribosomal subunit protein bL32 of Novosphingobium aromaticivorans (strain ATCC 700278 / DSM 12444 / CCUG 56034 / CIP 105152 / NBRC 16084 / F199).